The primary structure comprises 240 residues: Chromatin structure-remodeling complex protein BSH (240 aa).

This sequence belongs to the SNF5 family. In terms of assembly, interacts with SWI3A and SWI3B, but not with BRM. As to expression, expressed in roots, stems, leaves, flowers and siliques.

The protein localises to the nucleus. Its function is as follows. Component of a multiprotein complex equivalent of the yeast SWI/SNF complex, an ATP-dependent chromatin-remodeling complex, which is required for the positive and negative regulation of gene expression of a large number of genes. It changes chromatin structure by altering DNA-histone contacts within a nucleosome, leading eventually to a change in nucleosome position, thus facilitating or repressing binding of gene-specific transcription factors. The sequence is that of Chromatin structure-remodeling complex protein BSH (BSH) from Arabidopsis thaliana (Mouse-ear cress).